A 289-amino-acid polypeptide reads, in one-letter code: Thiosulfate sulfurtransferase (289 aa).

The Rhodanese 1 domain occupies 24–142 (VGAGLRVLDA…WVKEGHPVTA (119 aa)). The hinge stretch occupies residues 143-158 (EPSQPAEAVFKAKLDK). Residues 172 to 284 (GSKKFQVVDS…WFHRAPPQYK (113 aa)) enclose the Rhodanese 2 domain. Residue Arg-186 participates in substrate binding. Catalysis depends on Cys-244, which acts as the Cysteine persulfide intermediate. Lys-246 provides a ligand contact to substrate.

Monomer. Expressed in numerous tissues.

It is found in the mitochondrion matrix. The catalysed reaction is thiosulfate + hydrogen cyanide = thiocyanate + sulfite + 2 H(+). Its function is as follows. Together with MRPL18, acts as a mitochondrial import factor for the cytosolic 5S rRNA. Only the nascent unfolded cytoplasmic form is able to bind to the 5S rRNA. Formation of iron-sulfur complexes and cyanide detoxification. The protein is Thiosulfate sulfurtransferase (TST) of Gallus gallus (Chicken).